A 230-amino-acid polypeptide reads, in one-letter code: Protein-L-isoaspartate O-methyltransferase (230 aa).

Ser-65 is an active-site residue.

This sequence belongs to the methyltransferase superfamily. L-isoaspartyl/D-aspartyl protein methyltransferase family. Monomer. In terms of tissue distribution, highest contents in seeds.

Its subcellular location is the cytoplasm. It carries out the reaction [protein]-L-isoaspartate + S-adenosyl-L-methionine = [protein]-L-isoaspartate alpha-methyl ester + S-adenosyl-L-homocysteine. Catalyzes the methyl esterification of L-isoaspartyl residues in peptides and proteins that result from spontaneous decomposition of normal L-aspartyl and L-asparaginyl residues. It plays a role in the repair and/or degradation of damaged proteins. This enzyme does not act on D-aspartyl residues. In Triticum aestivum (Wheat), this protein is Protein-L-isoaspartate O-methyltransferase (PCM).